The sequence spans 1363 residues: Spike glycoprotein (1363 aa).

An N-terminal signal peptide occupies residues 1-13 (MFLILLISLPTAF). Over 14 to 1307 (AVIGDLKCTT…GTYEYYVKWP (1294 aa)) the chain is Extracellular. Residues 15–298 (VIGDLKCTTV…DFMSEIKCKT (284 aa)) form the BetaCoV S1-NTD domain. 5 cysteine pairs are disulfide-bonded: cysteine 21/cysteine 165, cysteine 160/cysteine 193, cysteine 172/cysteine 252, cysteine 286/cysteine 296, and cysteine 331/cysteine 356. 2 N-linked (GlcNAc...) asparagine; by host glycosylation sites follow: asparagine 59 and asparagine 133. N-linked (GlcNAc...) asparagine; by host glycosylation is present at asparagine 198. A BetaCoV S1-CTD domain is found at 329–617 (PDCNIEAWLN…DVNSGTTCST (289 aa)). The N-linked (GlcNAc...) asparagine; by host glycan is linked to asparagine 359. 2 cysteine pairs are disulfide-bonded: cysteine 374/cysteine 427 and cysteine 386/cysteine 615. Asparagine 437, asparagine 649, asparagine 676, asparagine 696, asparagine 714, asparagine 739, and asparagine 788 each carry an N-linked (GlcNAc...) asparagine; by host glycan. Fusion peptide regions lie at residues 914-935 (SAIE…VEAY) and 933-953 (EAYN…VQSY). The N-linked (GlcNAc...) asparagine; by host glycan is linked to asparagine 937. Residues cysteine 938 and cysteine 949 are joined by a disulfide bond. Positions 1014 to 1064 (QKLIANAFNNALGAIQEGFDATNSALVKIQAVVNANAEALNNLLQQLSNRF) are heptad repeat 1. Residues 1043 to 1087 (QAVVNANAEALNNLLQQLSNRFGAISSSLQEILSRLDALEAQAQI) are a coiled coil. Asparagine 1194, asparagine 1224, asparagine 1234, asparagine 1253, asparagine 1267, and asparagine 1288 each carry an N-linked (GlcNAc...) asparagine; by host glycan. Residues 1258–1296 (APDLSLDYINVTFLDLQDEMNRLQEAIKVLNQSYINLKD) form a heptad repeat 2 region. The stretch at 1269 to 1297 (TFLDLQDEMNRLQEAIKVLNQSYINLKDI) forms a coiled coil. A helical transmembrane segment spans residues 1308-1328 (WYVWLLIGFAGVAMLVLLFFI). The Cytoplasmic portion of the chain corresponds to 1329–1363 (CCCTGCGTSCFKKCGGCCDDYTGHQELVIKTSHDD). A KxHxx motif is present at residues 1359-1363 (TSHDD).

It belongs to the betacoronaviruses spike protein family. In terms of assembly, homotrimer; each monomer consists of a S1 and a S2 subunit. The resulting peplomers protrude from the virus surface as spikes. Post-translationally, specific enzymatic cleavages in vivo yield mature proteins. The precursor is processed into S1 and S2 by host cell furin or another cellular protease to yield the mature S1 and S2 proteins. Additionally, a second cleavage leads to the release of a fusion peptide after viral attachment to host cell receptor. The cytoplasmic Cys-rich domain is palmitoylated. Spike glycoprotein is digested within host endosomes.

It is found in the virion membrane. The protein localises to the host endoplasmic reticulum-Golgi intermediate compartment membrane. Its subcellular location is the host cell membrane. Attaches the virion to the cell membrane by interacting with host receptor, initiating the infection. Its function is as follows. Mediates fusion of the virion and cellular membranes by acting as a class I viral fusion protein. Under the current model, the protein has at least three conformational states: pre-fusion native state, pre-hairpin intermediate state, and post-fusion hairpin state. During viral and target cell membrane fusion, the coiled coil regions (heptad repeats) assume a trimer-of-hairpins structure, positioning the fusion peptide in close proximity to the C-terminal region of the ectodomain. The formation of this structure appears to drive apposition and subsequent fusion of viral and target cell membranes. In terms of biological role, acts as a viral fusion peptide which is unmasked following S2 cleavage occurring upon virus endocytosis. The sequence is that of Spike glycoprotein from Bovine coronavirus (strain LSU-94LSS-051) (BCoV-LSU).